We begin with the raw amino-acid sequence, 420 residues long: MGSRTVGWWLLAAAVVLAAAAADSGEAERAAEQHSERISGSAGDVLEDNPVGRLKVFIYDLPRKYNKKMVNKDPRCLNHMFAAEIFMHRFLLSSAVRTLNPKEADWFYTPVYTTCDLTPAGLPLPFKSPRVMRSAIQYISHKWPFWNRTDGADHFFVVPHDFGACFHYQEEKAIERGILPLLQRATLVQTFGQENHVCLKEGSITIPPYAPPQKMQAHLIPPDTPRSIFVYFRGLFYDTGNDPEGGYYARGARASLWENFKNNPLFDISTDHPPTYYEDMQRAVFCLCPLGWAPWSPRLVEAVVFGCIPVIIADDIVLPFADAIPWEEIGVFVEEKDVPKLDTILTSMPIDDILRKQRLLANPSMKQAMLFPQPAQPRDAFHQILNGLARKLPHPEGVYLQPSDKRLNWTAGPVGDLKAW.

At 1-4 (MGSR) the chain is on the cytoplasmic side. The helical; Signal-anchor for type II membrane protein transmembrane segment at 5 to 25 (TVGWWLLAAAVVLAAAAADSG) threads the bilayer. At 26–420 (EAERAAEQHS…AGPVGDLKAW (395 aa)) the chain is on the lumenal side. N-linked (GlcNAc...) asparagine glycans are attached at residues N147 and N408.

Belongs to the glycosyltransferase 47 family.

It localises to the golgi apparatus membrane. Involved in the synthesis of glucuronoxylan hemicellulose in secondary cell walls. In Oryza sativa subsp. japonica (Rice), this protein is Probable glucuronosyltransferase Os04g0398600.